Reading from the N-terminus, the 232-residue chain is Small ribosomal subunit protein uS3 (232 aa).

The 69-residue stretch at 39 to 107 folds into the KH type-2 domain; that stretch reads IRAFLKKKLY…EVNVNIKEER (69 aa). Positions 212 to 232 are disordered; it reads VQPEKTEDDAPKKTRRPRRGK. Over residues 213–223 the composition is skewed to basic and acidic residues; sequence QPEKTEDDAPK.

The protein belongs to the universal ribosomal protein uS3 family. Part of the 30S ribosomal subunit. Forms a tight complex with proteins S10 and S14.

Its function is as follows. Binds the lower part of the 30S subunit head. Binds mRNA in the 70S ribosome, positioning it for translation. The protein is Small ribosomal subunit protein uS3 of Campylobacter curvus (strain 525.92).